Reading from the N-terminus, the 93-residue chain is UPF0223 protein str0998 (93 aa).

Belongs to the UPF0223 family.

This chain is UPF0223 protein str0998, found in Streptococcus thermophilus (strain CNRZ 1066).